The following is a 320-amino-acid chain: 1-aminocyclopropane-1-carboxylate oxidase 3 (320 aa).

Positions Pro154 to Pro254 constitute a Fe2OG dioxygenase domain. Residues His178, Asp180, and His235 each coordinate Fe cation.

This sequence belongs to the iron/ascorbate-dependent oxidoreductase family. Fe cation is required as a cofactor. In terms of tissue distribution, flowers.

It carries out the reaction 1-aminocyclopropane-1-carboxylate + L-ascorbate + O2 = ethene + L-dehydroascorbate + hydrogen cyanide + CO2 + 2 H2O. It functions in the pathway alkene biosynthesis; ethylene biosynthesis via S-adenosyl-L-methionine; ethylene from S-adenosyl-L-methionine: step 2/2. This Cucumis melo (Muskmelon) protein is 1-aminocyclopropane-1-carboxylate oxidase 3 (ACO3).